The sequence spans 651 residues: MSYEGREERPEQIAEPTFENVSEHNEHDSGSAEAQVETLEVPLSNETDNDDATENAVPAEVQAPEEPKEPETVDNIDPADDDPNSVAAPKVEEKKSKKKAKDEKPLTYTTGGYLYCRSNGLIPHVMKRYFYMLEGPMSMDLLDHYYKKHFHGTLQGNPTEPSLASEQMHDSDADSLFQSANDHLNRIAKATQDCRGLLFYSKSQSTSVPSGIINLTDAVSIEPGTGNKFTINFNNGKSETLEALDPESKNTWITDLKNAIAKKKETKDKIKELRAYNDTLKRLGKLAARSGPSASETFRYFLPMLSNGRDAKKSSSKSHGGKQNNSVAKDGLFDFFQNMIKGKTPQNDTASPIDNETSADPVDTTVEAQSVEVPENETNQIPTTEEHFPATTEEVAPASEEKPATGPAEESTSTQNVEQASTQNDNGTPIGQIADAIEEDVKGTAQSVEQAFIEETDIALPDIALPDVATPTADDQDPSTAATNEESVVSNEDRTSKKAGKKHHRHHKKKKGGNKRVFGFKLHKYAKPTKSVKTLQADPSLEFAKAGFEIFPSNLSKKLSGLVQKKVHKKFDKDGRLKEISQFSKTTIKPETPLTPTTTPTPRTAAQEDPAEETTDALASAEGENNQMPQVLETEAAPSIASEGRSITVNA.

Basic and acidic residues-rich tracts occupy residues 1–12 and 21–30; these read MSYEGREERPEQ and VSEHNEHDSG. The disordered stretch occupies residues 1–102; sequence MSYEGREERP…EKKSKKKAKD (102 aa). Positions 72–83 are enriched in acidic residues; the sequence is TVDNIDPADDDP. The segment covering 90–102 has biased composition (basic and acidic residues); sequence KVEEKKSKKKAKD. The 68-residue stretch at 194-261 folds into the PH domain; sequence CRGLLFYSKS…WITDLKNAIA (68 aa). Disordered stretches follow at residues 365 to 430, 468 to 514, and 587 to 630; these read TVEA…GTPI, VATP…KGGN, and TIKP…QMPQ. Composition is skewed to polar residues over residues 410–429 and 478–490; these read ESTSTQNVEQASTQNDNGTP and PSTAATNEESVVS. A compositionally biased stretch (basic residues) spans 497-514; it reads KKAGKKHHRHHKKKKGGN. Over residues 587–604 the composition is skewed to low complexity; the sequence is TIKPETPLTPTTTPTPRT.

The polypeptide is Meiotic expression up-regulated protein 6 (meu6) (Schizosaccharomyces pombe (strain 972 / ATCC 24843) (Fission yeast)).